A 449-amino-acid polypeptide reads, in one-letter code: UMP-CMP kinase 2, mitochondrial (449 aa).

The transit peptide at 1–98 (MAFARRLLRG…VRAARLHQRL (98 aa)) directs the protein to the mitochondrion. Position 259–266 (259–266 (GLDATGKT)) interacts with ATP. The stretch at 380 to 412 (EERLQRLQGRGMEKTREEAELEANSVFRQKVEM) forms a coiled coil.

This sequence belongs to the thymidylate kinase family. High levels are observed in myeloid, lymphoid and mesenchymal tissues.

It is found in the mitochondrion. The catalysed reaction is CMP + ATP = CDP + ADP. It carries out the reaction dCMP + ATP = dCDP + ADP. The enzyme catalyses a 2'-deoxyribonucleoside 5'-diphosphate + ATP = a 2'-deoxyribonucleoside 5'-triphosphate + ADP. It catalyses the reaction a ribonucleoside 5'-diphosphate + ATP = a ribonucleoside 5'-triphosphate + ADP. Its function is as follows. Mitochondrial nucleotide monophosphate kinase needed for salvage dNTP synthesis that mediates immunomodulatory and antiviral activities through IFN-dependent and IFN-independent pathways. Restricts the replication of multiple viruses including flaviviruses or coronaviruses. Together with viperin/RSAD2 and ddhCTP, suppresses the replication of several coronaviruses through inhibition of the viral RNA-dependent RNA polymerase activities. Concerning flaviviruses, restricts RNA translation when localized to the mitochondria independently of its kinase activity. Is able to phosphorylate dUMP, dCMP, CMP, UMP and monophosphates of the pyrimidine nucleoside analogs ddC, dFdC, araC, BVDU and FdUrd with ATP as phosphate donor. Efficacy is highest for dUMP followed by dCMP while CMP and UMP are poor substrates. Controls therefore mitochondrial DNA synthesis by supplying required deoxyribonucleotides. CMPK2-dependent mitochondrial DNA synthesis is necessary for the production of oxidized mitochondrial DNA fragments after exposure to NLRP3 activators. In turn, cytosolic oxidized mtDNA associates with the NLRP3 inflammasome complex and is required for its activation. The protein is UMP-CMP kinase 2, mitochondrial (CMPK2) of Homo sapiens (Human).